A 189-amino-acid polypeptide reads, in one-letter code: Orcokinin peptides (189 aa).

A signal peptide spans 1–21; the sequence is MRGAGGALAVAVAALLVCCSA. 2 consecutive propeptides follow at residues 22–124 and 145–174; these read DPHQ…TFVK and FYHL…PIGS.

Belongs to the orcokinin family. Orcokinin-like peptide: Expressed in corpora cardiaca (CC), corpora allata (CA), antennal lobe (AL) and gnathal ganglion (GNG) (at protein level). Expression in CC, CA and GNG detected in some animals, in AL in few animals (at protein level). Orcokinin-like peptide precursor-related peptide: Expressed in corpora cardiaca (CC), corpora allata (CA), antennal lobe (AL) and gnathal ganglion (GNG) (at protein level). Expression in GNG detected in most animals, expression in CC, CA and AL detected in some animals (at protein level).

It localises to the secreted. Its function is as follows. Myotropic peptides. The protein is Orcokinin peptides of Agrotis ipsilon (Black cutworm moth).